A 370-amino-acid chain; its full sequence is Pantothenate kinase 3 (370 aa).

Glutamate 138 serves as the catalytic Proton acceptor. 3 residues coordinate acetyl-CoA: serine 192, serine 195, and arginine 207.

This sequence belongs to the type II pantothenate kinase family. As to quaternary structure, homodimer. Highly expressed in the liver.

Its subcellular location is the cytoplasm. The enzyme catalyses (R)-pantothenate + ATP = (R)-4'-phosphopantothenate + ADP + H(+). It participates in cofactor biosynthesis; coenzyme A biosynthesis; CoA from (R)-pantothenate: step 1/5. With respect to regulation, subject to allosteric regulation, exists in two distinct conformational states, a catalytically incompetent (or open) conformation stabilized by the binding of acetyl(acyl)-CoA, and a catalytically competent (or closed) conformation stabilized by ATP-binding. Acetyl-CoA and its thioesters act as allosteric inhibitors and compete with the ATP-binding site. Strongly inhibited by acetyl-CoA, malonyl-CoA and palmitoyl CoA and modestly inhibited by CoA. Inhibited by calcium hopantenate. In terms of biological role, catalyzes the phosphorylation of pantothenate to generate 4'-phosphopantothenate in the first and rate-determining step of coenzyme A (CoA) synthesis. The chain is Pantothenate kinase 3 (Pank3) from Mus musculus (Mouse).